The following is a 709-amino-acid chain: Meiotic sister-chromatid recombination protein 6, mitochondrial (709 aa).

Residues 1 to 29 (MLRINQRLLVRSLRDAQYQYLKSTALRFL) constitute a mitochondrion transit peptide.

Its subcellular location is the mitochondrion. May be involved in the control of meiotic sister-chromatid recombination. The chain is Meiotic sister-chromatid recombination protein 6, mitochondrial (MSC6) from Candida glabrata (strain ATCC 2001 / BCRC 20586 / JCM 3761 / NBRC 0622 / NRRL Y-65 / CBS 138) (Yeast).